A 270-amino-acid chain; its full sequence is tRNA pseudouridine synthase A (270 aa).

Asp-51 serves as the catalytic Nucleophile. Residue Tyr-109 coordinates substrate.

Belongs to the tRNA pseudouridine synthase TruA family. In terms of assembly, homodimer.

It catalyses the reaction uridine(38/39/40) in tRNA = pseudouridine(38/39/40) in tRNA. Functionally, formation of pseudouridine at positions 38, 39 and 40 in the anticodon stem and loop of transfer RNAs. In Burkholderia thailandensis (strain ATCC 700388 / DSM 13276 / CCUG 48851 / CIP 106301 / E264), this protein is tRNA pseudouridine synthase A.